The sequence spans 233 residues: B-cell lymphoma/leukemia 10 (233 aa).

Residue M1 is modified to N-acetylmethionine. In terms of domain architecture, CARD spans 13-101 (LTEVKKDALE…QNFLIQKITD (89 aa)). Glycyl lysine isopeptide (Lys-Gly) (interchain with G-Cter in ubiquitin) cross-links involve residues K17, K31, and K63. S138 carries the phosphoserine modification. Residues 187–233 (FSSTTLPRPGDPGAPPLPPDLQLEEEGTCANSSEMFLPLRSRTVSRQ) are disordered. The span at 195-205 (PGDPGAPPLPP) shows a compositional bias: pro residues.

Homomultimer; homooligomerized following recruitment by CARD domain-containing proteins that form a nucleating helical template that recruits BCL10 via CARD-CARD interaction. Self-associates by CARD-CARD interaction and interacts with other CARD-proteins such as CARD9, CARD10, CARD11 and CARD14. Forms a complex with CARD14 and MALT1; resulting in the formation of a CBM (CARD14-BCL10-MALT1) complex. Forms a complex with CARD11 and MALT1; resulting in the formation of a CBM (CARD11-BCL10-MALT1) complex. Forms a complex with CARD9 and MALT1; resulting in the formation of a CBM (CARD9-BCL10-MALT1) complex. Found in a membrane raft complex, at least composed of BCL10, CARD11, DPP4 and IKBKB. Binds caspase-9 with its C-terminal domain. Interacts with TRAF2 and BIRC2/c-IAP2. Interacts with PELI2 and SOCS3; these interactions may be mutually exclusive. Phosphorylated. Phosphorylation results in dissociation from TRAF2 and binding to BIRC2/c-IAP2. Phosphorylated by IKBKB/IKKB. Post-translationally, ubiquitinated via both 'Lys-63'-linked and linear ('Met-1'-linked) polyubiquitin chains in response to T-cell receptor (TCR) activation. Ubiquitination is recognized by IKBKG/NEMO, the regulatory subunit of I-kappa-B kinase (IKK), and is required for TCR-induced NF-kappa-B activation. Linear ubiquitination at Lys-17, Lys-31 and Lys-63 is mediated by RNF31/HOIP; linear ubiquitination is recognized with much higher affinity than 'Lys-63'-linked ubiquitin by IKBKG/NEMO. CARD11 is required for linear ubiquitination by HOIP by promoting the targeting of BCL10 to RNF31/HOIP. In terms of processing, proteolytically cleaved by MALT1; required for T-cell activation. As to expression, ubiquitous.

The protein localises to the cytoplasm. Its subcellular location is the perinuclear region. It localises to the membrane raft. Its function is as follows. Plays a key role in both adaptive and innate immune signaling by bridging CARD domain-containing proteins to immune activation. Acts by channeling adaptive and innate immune signaling downstream of CARD domain-containing proteins CARD9, CARD11 and CARD14 to activate NF-kappa-B and MAP kinase p38 (MAPK11, MAPK12, MAPK13 and/or MAPK14) pathways which stimulate expression of genes encoding pro-inflammatory cytokines and chemokines. Recruited by activated CARD domain-containing proteins: homooligomerized CARD domain-containing proteins form a nucleating helical template that recruits BCL10 via CARD-CARD interaction, thereby promoting polymerization of BCL10, subsequent recruitment of MALT1 and formation of a CBM complex. This leads to activation of NF-kappa-B and MAP kinase p38 (MAPK11, MAPK12, MAPK13 and/or MAPK14) pathways which stimulate expression of genes encoding pro-inflammatory cytokines and chemokines. Activated by CARD9 downstream of C-type lectin receptors; CARD9-mediated signals are essential for antifungal immunity. Activated by CARD11 downstream of T-cell receptor (TCR) and B-cell receptor (BCR). Promotes apoptosis, pro-caspase-9 maturation and activation of NF-kappa-B via NIK and IKK. In Homo sapiens (Human), this protein is B-cell lymphoma/leukemia 10.